The chain runs to 841 residues: Probable inorganic carbon transporter subunit DabA 1 (841 aa).

Residues Cys352, Asp354, His536, and Cys551 each contribute to the Zn(2+) site.

This sequence belongs to the inorganic carbon transporter (TC 9.A.2) DabA family. In terms of assembly, forms a complex with DabB. The cofactor is Zn(2+).

The protein resides in the cell inner membrane. In terms of biological role, part of an energy-coupled inorganic carbon pump. The protein is Probable inorganic carbon transporter subunit DabA 1 of Bradyrhizobium sp. (strain ORS 278).